A 347-amino-acid polypeptide reads, in one-letter code: Protein RecA (347 aa).

65–72 lines the ATP pocket; the sequence is GPESSGKT. Over residues 327-336 the composition is skewed to basic and acidic residues; it reads KFEPTELSRE. The segment at 327–347 is disordered; it reads KFEPTELSREEGDEDTLEDAM. Positions 337 to 347 are enriched in acidic residues; it reads EGDEDTLEDAM.

The protein belongs to the RecA family.

Its subcellular location is the cytoplasm. Functionally, can catalyze the hydrolysis of ATP in the presence of single-stranded DNA, the ATP-dependent uptake of single-stranded DNA by duplex DNA, and the ATP-dependent hybridization of homologous single-stranded DNAs. It interacts with LexA causing its activation and leading to its autocatalytic cleavage. In Xylella fastidiosa (strain M23), this protein is Protein RecA.